Here is a 355-residue protein sequence, read N- to C-terminus: tRNA-specific 2-thiouridylase MnmA (355 aa).

Residues 6 to 13 (LLSGGVDS) and Leu33 each bind ATP. Cys100 serves as the catalytic Nucleophile. Cys100 and Cys195 are oxidised to a cystine. ATP is bound at residue Gly123. The interval 145 to 147 (KDQ) is interaction with tRNA. Catalysis depends on Cys195, which acts as the Cysteine persulfide intermediate.

It belongs to the MnmA/TRMU family.

It localises to the cytoplasm. The catalysed reaction is S-sulfanyl-L-cysteinyl-[protein] + uridine(34) in tRNA + AH2 + ATP = 2-thiouridine(34) in tRNA + L-cysteinyl-[protein] + A + AMP + diphosphate + H(+). In terms of biological role, catalyzes the 2-thiolation of uridine at the wobble position (U34) of tRNA, leading to the formation of s(2)U34. The protein is tRNA-specific 2-thiouridylase MnmA of Borreliella burgdorferi (strain ATCC 35210 / DSM 4680 / CIP 102532 / B31) (Borrelia burgdorferi).